The following is a 770-amino-acid chain: Endothelin-converting enzyme 1 (770 aa).

At 1–68 the chain is on the cytoplasmic side; the sequence is MRGVWPPPVS…WAARTQVEKR (68 aa). T25 carries the post-translational modification Phosphothreonine. Residues 69–89 traverse the membrane as a helical; Signal-anchor for type II membrane protein segment; sequence LVVLVVLLAAGLVACLAALGI. Residues 90 to 770 lie on the Extracellular side of the membrane; it reads QYQTRSPSVC…MNPPHKCEVW (681 aa). The Peptidase M13 domain maps to 98 to 770; sequence VCLSEACVSV…MNPPHKCEVW (673 aa). Disulfide bonds link C99–C104, C122–C755, C130–C715, C185–C435, and C644–C767. N166, N187, N210, N270, N316, N362, N383, and N539 each carry an N-linked (GlcNAc...) asparagine glycan. H607 is a Zn(2+) binding site. E608 is a catalytic residue. H611 is a binding site for Zn(2+). 2 N-linked (GlcNAc...) asparagine glycosylation sites follow: N632 and N651. E667 is a Zn(2+) binding site. D671 acts as the Proton donor in catalysis.

The protein belongs to the peptidase M13 family. As to quaternary structure, homodimer; disulfide-linked. Interacts with PPP1R16B. Interacts with TSPAN8; this interaction recruits the endothelin converting enzyme ECE1 to tetraspanin-enriched microdomains and positively modulates its enzymatic activity. Zn(2+) serves as cofactor. In terms of tissue distribution, all isoforms are expressed in umbilical vein endothelial cells, polynuclear neutrophils, fibroblasts, atrium cardiomyocytes and ventricles. Isoforms A, B and C are also expressed in placenta, lung, heart, adrenal gland and phaeochromocytoma; isoforms A and C in liver, testis and small intestine; isoform B, C and D in endothelial cells and umbilical vein smooth muscle cells; isoforms C and D in saphenous vein cells, and isoform C in kidney.

The protein localises to the cell membrane. It catalyses the reaction Hydrolysis of the 21-Trp-|-Val-22 bond in big endothelin to form endothelin 1.. Inhibited by phosphoramidon. Activated by K49-P1-20, a twenty-residue synthetic peptide shortened from the snake B.asper myotoxin II. Its function is as follows. Converts big endothelin-1 to endothelin-1. This chain is Endothelin-converting enzyme 1 (ECE1), found in Homo sapiens (Human).